We begin with the raw amino-acid sequence, 325 residues long: Homoserine O-succinyltransferase (325 aa).

C142 acts as the Acyl-thioester intermediate in catalysis. Substrate is bound by residues K163 and S191. H234 functions as the Proton acceptor in the catalytic mechanism. The active site involves E236. R248 lines the substrate pocket.

This sequence belongs to the MetA family.

The protein resides in the cytoplasm. It catalyses the reaction L-homoserine + succinyl-CoA = O-succinyl-L-homoserine + CoA. It participates in amino-acid biosynthesis; L-methionine biosynthesis via de novo pathway; O-succinyl-L-homoserine from L-homoserine: step 1/1. Functionally, transfers a succinyl group from succinyl-CoA to L-homoserine, forming succinyl-L-homoserine. The sequence is that of Homoserine O-succinyltransferase from Bradyrhizobium japonicum.